The sequence spans 265 residues: NAD kinase 2 (265 aa).

The Proton acceptor role is filled by Asp51. Residues 51 to 52 (DG), 122 to 123 (NE), Arg149, Asp151, 162 to 167 (TAYNKS), and Ala186 each bind NAD(+).

This sequence belongs to the NAD kinase family. Requires a divalent metal cation as cofactor.

The protein localises to the cytoplasm. It catalyses the reaction NAD(+) + ATP = ADP + NADP(+) + H(+). Its function is as follows. Involved in the regulation of the intracellular balance of NAD and NADP, and is a key enzyme in the biosynthesis of NADP. Catalyzes specifically the phosphorylation on 2'-hydroxyl of the adenosine moiety of NAD to yield NADP. The chain is NAD kinase 2 from Bacillus licheniformis (strain ATCC 14580 / DSM 13 / JCM 2505 / CCUG 7422 / NBRC 12200 / NCIMB 9375 / NCTC 10341 / NRRL NRS-1264 / Gibson 46).